The primary structure comprises 379 residues: Queuine tRNA-ribosyltransferase (379 aa).

D94 acts as the Proton acceptor in catalysis. Residues 94-98 (DSGGF), D148, Q191, and G218 contribute to the substrate site. Positions 249-255 (GVGSPDS) are RNA binding. D268 functions as the Nucleophile in the catalytic mechanism. The tract at residues 273 to 277 (TRIAR) is RNA binding; important for wobble base 34 recognition. Zn(2+) is bound by residues C306, C308, C311, and H337.

The protein belongs to the queuine tRNA-ribosyltransferase family. In terms of assembly, homodimer. Within each dimer, one monomer is responsible for RNA recognition and catalysis, while the other monomer binds to the replacement base PreQ1. Zn(2+) is required as a cofactor.

The enzyme catalyses 7-aminomethyl-7-carbaguanine + guanosine(34) in tRNA = 7-aminomethyl-7-carbaguanosine(34) in tRNA + guanine. It functions in the pathway tRNA modification; tRNA-queuosine biosynthesis. Catalyzes the base-exchange of a guanine (G) residue with the queuine precursor 7-aminomethyl-7-deazaguanine (PreQ1) at position 34 (anticodon wobble position) in tRNAs with GU(N) anticodons (tRNA-Asp, -Asn, -His and -Tyr). Catalysis occurs through a double-displacement mechanism. The nucleophile active site attacks the C1' of nucleotide 34 to detach the guanine base from the RNA, forming a covalent enzyme-RNA intermediate. The proton acceptor active site deprotonates the incoming PreQ1, allowing a nucleophilic attack on the C1' of the ribose to form the product. After dissociation, two additional enzymatic reactions on the tRNA convert PreQ1 to queuine (Q), resulting in the hypermodified nucleoside queuosine (7-(((4,5-cis-dihydroxy-2-cyclopenten-1-yl)amino)methyl)-7-deazaguanosine). The chain is Queuine tRNA-ribosyltransferase from Listeria monocytogenes serovar 1/2a (strain ATCC BAA-679 / EGD-e).